A 521-amino-acid polypeptide reads, in one-letter code: Pentatricopeptide repeat-containing protein At4g26680, mitochondrial (521 aa).

The transit peptide at 1–38 (MIRISIGVNRRLRYQFSSFAGYSGSENPRLFKTLGAAN) directs the protein to the mitochondrion. 10 PPR repeats span residues 167–201 (TPRVFDSLFKTFAHLKKFRNATDTFMQMKDYGFLP), 202–236 (TVESCNAYMSSLLGQGRVDIALRFYREMRRCKISP), 237–271 (NPYTLNMVMSGYCRSGKLDKGIELLQDMERLGFRA), 272–306 (TDVSYNTLIAGHCEKGLLSSALKLKNMMGKSGLQP), 307–341 (NVVTFNTLIHGFCRAMKLQEASKVFGEMKAVNVAP), 342–376 (NTVTYNTLINGYSQQGDHEMAFRFYEDMVCNGIQR), 377–411 (DILTYNALIFGLCKQAKTRKAAQFVKELDKENLVP), 412–446 (NSSTFSALIMGQCVRKNADRGFELYKSMIRSGCHP), 447–481 (NEQTFNMLVSAFCRNEDFDGASQVLREMVRRSIPL), and 482–516 (DSRTVHQVCNGLKHQGKDQLVKKLLQEMEGKKFLQ).

This sequence belongs to the PPR family. P subfamily.

It is found in the mitochondrion. This is Pentatricopeptide repeat-containing protein At4g26680, mitochondrial from Arabidopsis thaliana (Mouse-ear cress).